A 682-amino-acid polypeptide reads, in one-letter code: Potassium-transporting ATPase ATP-binding subunit (682 aa).

4 consecutive transmembrane segments (helical) span residues 34 to 54 (PVMF…IAMA), 62 to 82 (ALFS…ANFA), 219 to 239 (IALT…TATL), and 254 to 274 (VLVA…LSAI). Catalysis depends on D307, which acts as the 4-aspartylphosphate intermediate. ATP is bound by residues D344, E348, 377-384 (FTAQSRMS), and K395. Residues D518 and D522 each coordinate Mg(2+). The next 3 membrane-spanning stretches (helical) occupy residues 588 to 608 (FAII…LNIM), 616 to 636 (AILS…PLAL), and 656 to 676 (IYGL…DLLL).

The protein belongs to the cation transport ATPase (P-type) (TC 3.A.3) family. Type IA subfamily. The system is composed of three essential subunits: KdpA, KdpB and KdpC.

The protein resides in the cell inner membrane. The enzyme catalyses K(+)(out) + ATP + H2O = K(+)(in) + ADP + phosphate + H(+). Its function is as follows. Part of the high-affinity ATP-driven potassium transport (or Kdp) system, which catalyzes the hydrolysis of ATP coupled with the electrogenic transport of potassium into the cytoplasm. This subunit is responsible for energy coupling to the transport system and for the release of the potassium ions to the cytoplasm. The polypeptide is Potassium-transporting ATPase ATP-binding subunit (Escherichia coli O157:H7 (strain EC4115 / EHEC)).